The following is a 92-amino-acid chain: PqqA binding protein (92 aa).

Belongs to the PqqD family. Monomer. Interacts with PqqE.

It participates in cofactor biosynthesis; pyrroloquinoline quinone biosynthesis. Functionally, functions as a PqqA binding protein and presents PqqA to PqqE, in the pyrroloquinoline quinone (PQQ) biosynthetic pathway. The chain is PqqA binding protein from Xanthomonas campestris pv. campestris (strain 8004).